Reading from the N-terminus, the 351-residue chain is Cyclic AMP-dependent transcription factor ATF-4 (351 aa).

Lys-53 participates in a covalent cross-link: Glycyl lysine isopeptide (Lys-Gly) (interchain with G-Cter in SUMO2). The disordered stretch occupies residues 210–268; sequence EEDTPSDNDSGICMSPESYLGSPQHSPSTRGSPNRSLPSPGVLCGSARPKPYDPPGEKM. Thr-213 carries the post-translational modification Phosphothreonine. Position 215 is a phosphoserine; by CK2 (Ser-215). The BetaTrCP degron motif motif lies at 215-224; the sequence is SDNDSGICMS. Ser-219, Ser-224, Ser-231, and Ser-235 each carry phosphoserine. Polar residues predominate over residues 230 to 246; the sequence is GSPQHSPSTRGSPNRSL. Position 236 is a 4-hydroxyproline (Pro-236). A Phosphoserine; by RPS6KA3 modification is found at Ser-245. Ser-248 is subject to Phosphoserine. Residues Lys-259, Lys-267, and Lys-272 each participate in a glycyl lysine isopeptide (Lys-Gly) (interchain with G-Cter in SUMO2) cross-link. The 64-residue stretch at 278–341 folds into the bZIP domain; it reads LDKKLKKMEQ…QYLKDLIEEV (64 aa). Positions 280–300 are basic motif; it reads KKLKKMEQNKTAATRYRQKKR. The stretch at 280–340 forms a coiled coil; it reads KKLKKMEQNK…IQYLKDLIEE (61 aa). The segment at 305–341 is interaction with GABBR1; that stretch reads ALTGECKELEKKNEALKERADSLAKEIQYLKDLIEEV. Residues 306 to 334 form a leucine-zipper region; the sequence is LTGECKELEKKNEALKERADSLAKEIQYL. An N6-acetyllysine modification is found at Lys-311.

It belongs to the bZIP family. In terms of assembly, binds DNA as a homodimer and as a heterodimer. Heterodimer; heterodimerizes with CEBPB. Heterodimer; heterodimerizes with DDIT3/CHOP. Interacts with CEP290 (via an N-terminal region). Interacts with NEK6, DAPK2 (isoform 2) and ZIPK/DAPK3. Interacts (via its leucine zipper domain) with GABBR1 and GABBR2 (via their C-termini). Forms a heterodimer with TXLNG in osteoblasts. Interacts (via its DNA binding domain) with FOXO1 (C-terminal half); the interaction occurs in osteoblasts and regulates glucose homeostasis through suppression of beta-cell proliferation and a decrease in insulin production. Interacts with SATB2; the interaction results in enhanced DNA binding and transactivation by these transcription factors. Interacts with ABRAXAS2. Interacts with TRIB3, inhibiting the transactivation activity of ATF4. Interacts with DISC1; which inhibits ATF4 transcription factor activity by disrupting ATF4 dimerization and DNA-binding. Interacts with EP300/p300; EP300/p300 stabilizes ATF4 and increases its transcriptional activity independently of its catalytic activity by preventing its ubiquitination. Post-translationally, ubiquitinated by SCF(BTRC) in response to mTORC1 signal, followed by proteasomal degradation and leading to down-regulate expression of SIRT4. Interaction with EP300/p300 inhibits ubiquitination by SCF(BTRC). In terms of processing, phosphorylation at Ser-245 by RPS6KA3/RSK2 in osteoblasts enhances transactivation activity and promotes osteoblast differentiation. Phosphorylated on the betaTrCP degron motif at Ser-219, followed by phosphorylation at Thr-213, Ser-224, Ser-231, Ser-235 and Ser-248, promoting interaction with BTRC and ubiquitination. Phosphorylation is promoted by mTORC1. Phosphorylation at Ser-215 by CK2 decreases its stability. Phosphorylated by NEK6. Hydroxylated by PHD3, leading to decreased protein stability.

Its subcellular location is the nucleus. The protein resides in the nucleus speckle. The protein localises to the cytoplasm. It localises to the cell membrane. It is found in the cytoskeleton. Its subcellular location is the microtubule organizing center. The protein resides in the centrosome. Functionally, transcription factor that binds the cAMP response element (CRE) (consensus: 5'-GTGACGT[AC][AG]-3') and displays two biological functions, as regulator of metabolic and redox processes under normal cellular conditions, and as master transcription factor during integrated stress response (ISR). Binds to asymmetric CRE's as a heterodimer and to palindromic CRE's as a homodimer. Core effector of the ISR, which is required for adaptation to various stress such as endoplasmic reticulum (ER) stress, amino acid starvation, mitochondrial stress or oxidative stress. During ISR, ATF4 translation is induced via an alternative ribosome translation re-initiation mechanism in response to EIF2S1/eIF-2-alpha phosphorylation, and stress-induced ATF4 acts as a master transcription factor of stress-responsive genes in order to promote cell recovery. Promotes the transcription of genes linked to amino acid sufficiency and resistance to oxidative stress to protect cells against metabolic consequences of ER oxidation. Activates the transcription of NLRP1, possibly in concert with other factors in response to ER stress. Activates the transcription of asparagine synthetase (ASNS) in response to amino acid deprivation or ER stress. However, when associated with DDIT3/CHOP, the transcriptional activation of the ASNS gene is inhibited in response to amino acid deprivation. Together with DDIT3/CHOP, mediates programmed cell death by promoting the expression of genes involved in cellular amino acid metabolic processes, mRNA translation and the terminal unfolded protein response (terminal UPR), a cellular response that elicits programmed cell death when ER stress is prolonged and unresolved. Activates the expression of COX7A2L/SCAF1 downstream of the EIF2AK3/PERK-mediated unfolded protein response, thereby promoting formation of respiratory chain supercomplexes and increasing mitochondrial oxidative phosphorylation. Together with DDIT3/CHOP, activates the transcription of the IRS-regulator TRIB3 and promotes ER stress-induced neuronal cell death by regulating the expression of BBC3/PUMA in response to ER stress. May cooperate with the UPR transcriptional regulator QRICH1 to regulate ER protein homeostasis which is critical for cell viability in response to ER stress. In the absence of stress, ATF4 translation is at low levels and it is required for normal metabolic processes such as embryonic lens formation, fetal liver hematopoiesis, bone development and synaptic plasticity. Acts as a regulator of osteoblast differentiation in response to phosphorylation by RPS6KA3/RSK2: phosphorylation in osteoblasts enhances transactivation activity and promotes expression of osteoblast-specific genes and post-transcriptionally regulates the synthesis of Type I collagen, the main constituent of the bone matrix. Cooperates with FOXO1 in osteoblasts to regulate glucose homeostasis through suppression of beta-cell production and decrease in insulin production. Activates transcription of SIRT4. Regulates the circadian expression of the core clock component PER2 and the serotonin transporter SLC6A4. Binds in a circadian time-dependent manner to the cAMP response elements (CRE) in the SLC6A4 and PER2 promoters and periodically activates the transcription of these genes. Mainly acts as a transcriptional activator in cellular stress adaptation, but it can also act as a transcriptional repressor: acts as a regulator of synaptic plasticity by repressing transcription, thereby inhibiting induction and maintenance of long-term memory. Regulates synaptic functions via interaction with DISC1 in neurons, which inhibits ATF4 transcription factor activity by disrupting ATF4 dimerization and DNA-binding. Its function is as follows. (Microbial infection) Binds to a Tax-responsive enhancer element in the long terminal repeat of HTLV-I. This chain is Cyclic AMP-dependent transcription factor ATF-4, found in Homo sapiens (Human).